The chain runs to 437 residues: Mitochondrial distribution and morphology protein 12 (437 aa).

One can recognise an SMP-LTD domain in the interval 1 to 437; sequence MSIDINWRTA…VYPSFWTFLI (437 aa). Residues 73–85 show a composition bias toward acidic residues; it reads DDDADTSDVSEDL. 3 disordered regions span residues 73-101, 187-274, and 354-384; these read DDDA…SELN, SDSG…PPRM, and SEQQ…RQGG. The segment covering 91–101 has biased composition (basic and acidic residues); sequence SQWDRTHSELN. 2 stretches are compositionally biased toward polar residues: residues 215–240 and 371–381; these read DTSN…NNLN and ADSSAHTSQKR.

The protein belongs to the MDM12 family. In terms of assembly, component of the ER-mitochondria encounter structure (ERMES) or MDM complex, composed of mmm1, mdm10, mdm12 and mdm34. A mmm1 homodimer associates with one molecule of mdm12 on each side in a pairwise head-to-tail manner, and the SMP-LTD domains of mmm1 and mdm12 generate a continuous hydrophobic tunnel for phospholipid trafficking.

The protein localises to the mitochondrion outer membrane. The protein resides in the endoplasmic reticulum membrane. Its function is as follows. Component of the ERMES/MDM complex, which serves as a molecular tether to connect the endoplasmic reticulum (ER) and mitochondria. Components of this complex are involved in the control of mitochondrial shape and protein biogenesis, and function in nonvesicular lipid trafficking between the ER and mitochondria. Mdm12 is required for the interaction of the ER-resident membrane protein mmm1 and the outer mitochondrial membrane-resident beta-barrel protein mdm10. The mdm12-mmm1 subcomplex functions in the major beta-barrel assembly pathway that is responsible for biogenesis of all mitochondrial outer membrane beta-barrel proteins, and acts in a late step after the SAM complex. The mdm10-mdm12-mmm1 subcomplex further acts in the TOM40-specific pathway after the action of the mdm12-mmm1 complex. Essential for establishing and maintaining the structure of mitochondria and maintenance of mtDNA nucleoids. The protein is Mitochondrial distribution and morphology protein 12 of Aspergillus clavatus (strain ATCC 1007 / CBS 513.65 / DSM 816 / NCTC 3887 / NRRL 1 / QM 1276 / 107).